The chain runs to 552 residues: uncharacterized protein (552 aa).

4 helical membrane-spanning segments follow: residues 127–147 (AIML…ISLL), 160–180 (LIIV…YINI), 393–413 (LTKQ…LSAV), and 517–537 (VIDS…FICI).

The protein localises to the membrane. This is an uncharacterized protein from Saccharomyces cerevisiae (strain ATCC 204508 / S288c) (Baker's yeast).